The sequence spans 476 residues: mRNA cap guanine-N(7) methyltransferase (476 aa).

Basic and acidic residues predominate over residues 1-14; that stretch reads MANSAKAEEYEKMS. The disordered stretch occupies residues 1–146; that stretch reads MANSAKAEEY…KQKNLEEGHS (146 aa). Residues 20-50 are compositionally biased toward polar residues; that stretch reads ASVNSETESSFNINENTTASGTGLSEKTSVC. Residues Ser-24, Ser-28, and Ser-29 each carry the phosphoserine modification. Basic and acidic residues-rich tracts occupy residues 54–68 and 84–118; these read DIAR…DLVK and LDPE…DKSS. Position 118 is a phosphoserine (Ser-118). The Nuclear localization signal signature appears at 126–128; sequence KRK. A compositionally biased stretch (basic and acidic residues) spans 129–145; sequence IALEDVPEKQKNLEEGH. Residues 167–475 form the mRNA cap 0 methyltransferase domain; sequence SRIFYLRNFN…IYLVFAFEKQ (309 aa). 176–177 provides a ligand contact to mRNA; that stretch reads NN. Residues Lys-180, Gly-205, Asp-227, Asp-261, Gln-284, and Tyr-289 each coordinate S-adenosyl-L-methionine.

This sequence belongs to the class I-like SAM-binding methyltransferase superfamily. mRNA cap 0 methyltransferase family. Interacts with importin alpha, leading to stimulate both RNA-binding and methyltransferase activity. Interaction with importin alpha and beta is required for its nuclear localization, importin beta dissociating in response to RanGTP, allowing RNMT-importin alpha to bind RNA substrates. Interacts with elongating form of polymerase II and RNGTT. Interacts with RAMAC, this interaction significantly enhances RNA-binding and cap methyltransferase activity. Widely expressed.

It localises to the nucleus. The catalysed reaction is a 5'-end (5'-triphosphoguanosine)-ribonucleoside in mRNA + S-adenosyl-L-methionine = a 5'-end (N(7)-methyl 5'-triphosphoguanosine)-ribonucleoside in mRNA + S-adenosyl-L-homocysteine. Methyltransferase activity is activated by RAMAC. In terms of biological role, catalytic subunit of the mRNA-capping methyltransferase RNMT:RAMAC complex that methylates the N7 position of the added guanosine to the 5'-cap structure of mRNAs. Binds RNA containing 5'-terminal GpppC. This is mRNA cap guanine-N(7) methyltransferase (RNMT) from Homo sapiens (Human).